We begin with the raw amino-acid sequence, 88 residues long: Small ribosomal subunit protein bS20 (88 aa).

Belongs to the bacterial ribosomal protein bS20 family.

Binds directly to 16S ribosomal RNA. This is Small ribosomal subunit protein bS20 from Brucella abortus (strain S19).